Reading from the N-terminus, the 2009-residue chain is Protein Daple (2009 aa).

Positions 11 to 131 (LFLQSPLVTW…KVLLLVLGCA (121 aa)) constitute a Calponin-homology (CH) domain. The interval 221-251 (QTQQPPSPGKFSSPDSTPSPTSSLSSEDKQH) is disordered. A phosphoserine mark is found at Ser227 and Ser239. Residues 232 to 245 (SSPDSTPSPTSSLS) are compositionally biased toward low complexity. Coiled coils occupy residues 247–425 (EDKQ…QKQS) and 456–1008 (ELNE…TQEG). Position 486 is a phosphoserine (Ser486). The tract at residues 1002-1036 (LRQTQEGGDKAQNALKRPPGKVTSHQEKEAWEPSH) is disordered. The segment covering 1025–1036 (SHQEKEAWEPSH) has biased composition (basic and acidic residues). Residues 1190–1384 (HRNLELEHKE…LEEKIMDQYK (195 aa)) adopt a coiled-coil conformation. Residues 1410 to 1419 (KEGSRERLKS) show a composition bias toward basic and acidic residues. 2 disordered regions span residues 1410–1716 (KEGS…GAKM) and 1757–1787 (GMPSRQVQPPQSLSLGRPRQTTMTQNCHMPV). A compositionally biased stretch (low complexity) spans 1430–1439 (PSDPASPSPS). Position 1435 is a phosphoserine (Ser1435). Positions 1440-1449 (QALRSQTENP) are enriched in polar residues. Low complexity-rich tracts occupy residues 1510–1524 (TFSTSATTAALSSST) and 1562–1581 (NSLESSRNASSNSSPLSLKG). At Ser1592 the chain carries Phosphoserine. Positions 1652–1683 (HSASPSSEMVTLEEFLEESNRGGSPTHDTPSC) match the GBA motif. Residues 1681-1697 (PSCRDDLLSDYFRKAHD) show a composition bias toward basic and acidic residues. Polar residues predominate over residues 1761–1783 (RQVQPPQSLSLGRPRQTTMTQNC). Position 1798 is a phosphoserine (Ser1798). The segment at 1808–2009 (SGPEACRPES…QTVWYEYGCV (202 aa)) is disordered. Positions 1866-1883 (RPLDTRRFSLAPPKEERL) are enriched in basic and acidic residues. The span at 1898-1911 (GCSSGSNPQIQHFS) shows a compositional bias: polar residues. A compositionally biased stretch (gly residues) spans 1943-1954 (TSEGDGGPGHGY). Residues 1981–1991 (SQGSSSKSTPA) show a composition bias toward polar residues. A PDZ-binding motif is present at residues 2006 to 2009 (YGCV). The tract at residues 2007-2009 (GCV) is DVL1-binding.

This sequence belongs to the CCDC88 family. In terms of assembly, homooligomer. Interacts with DVL1 (via PDZ domain); dissociates following initiation of non-canonical Wnt signaling. Interacts (via C-terminus) with ligand-activated Wnt receptor FZD7; competes with DVL1 for binding to FZD7 and displaces DVL1 from ligand-activated FZD7. Interacts (via GBA motif) with guanine nucleotide-binding protein G(i) alpha subunits GNAI1, GNAI2 and GNAI3 (inactive GDP-bound form); interacts with higher affinity with GNAI1 and GNAI3 than with GNAI2 and interaction leads to G(i) alpha subunit activation. Does not interact with GNAO1.

The protein resides in the cytoplasm. The protein localises to the cell junction. Required for activation of guanine nucleotide-binding proteins (G-proteins) during non-canonical Wnt signaling. Binds to ligand-activated Wnt receptor FZD7, displacing DVL1 from the FZD7 receptor and leading to inhibition of canonical Wnt signaling. Acts as a non-receptor guanine nucleotide exchange factor by also binding to guanine nucleotide-binding protein G(i) alpha (Gi-alpha) subunits, leading to their activation. Binding to Gi-alpha subunits displaces the beta and gamma subunits from the heterotrimeric G-protein complex, triggering non-canonical Wnt responses such as activation of RAC1 and PI3K-AKT signaling. Promotes apical constriction of cells via ARHGEF18. The chain is Protein Daple (Ccdc88c) from Mus musculus (Mouse).